We begin with the raw amino-acid sequence, 241 residues long: Demethylmenaquinone methyltransferase (241 aa).

S-adenosyl-L-methionine contacts are provided by residues Thr-68, Asp-88, and 114-115 (DA).

It belongs to the class I-like SAM-binding methyltransferase superfamily. MenG/UbiE family.

It carries out the reaction a 2-demethylmenaquinol + S-adenosyl-L-methionine = a menaquinol + S-adenosyl-L-homocysteine + H(+). The protein operates within quinol/quinone metabolism; menaquinone biosynthesis; menaquinol from 1,4-dihydroxy-2-naphthoate: step 2/2. Functionally, methyltransferase required for the conversion of demethylmenaquinol (DMKH2) to menaquinol (MKH2). The sequence is that of Demethylmenaquinone methyltransferase from Deinococcus radiodurans (strain ATCC 13939 / DSM 20539 / JCM 16871 / CCUG 27074 / LMG 4051 / NBRC 15346 / NCIMB 9279 / VKM B-1422 / R1).